Reading from the N-terminus, the 365-residue chain is Alanine racemase (365 aa).

K32 serves as the catalytic Proton acceptor; specific for D-alanine. At K32 the chain carries N6-(pyridoxal phosphate)lysine. Residue R128 participates in substrate binding. Catalysis depends on Y257, which acts as the Proton acceptor; specific for L-alanine. Position 305 (M305) interacts with substrate.

The protein belongs to the alanine racemase family. Pyridoxal 5'-phosphate is required as a cofactor.

It carries out the reaction L-alanine = D-alanine. It functions in the pathway amino-acid biosynthesis; D-alanine biosynthesis; D-alanine from L-alanine: step 1/1. Functionally, catalyzes the interconversion of L-alanine and D-alanine. May also act on other amino acids. The chain is Alanine racemase (alr) from Francisella tularensis subsp. holarctica (strain FTNF002-00 / FTA).